The sequence spans 51 residues: Large ribosomal subunit protein bL33 (51 aa).

It belongs to the bacterial ribosomal protein bL33 family.

This is Large ribosomal subunit protein bL33 from Idiomarina loihiensis (strain ATCC BAA-735 / DSM 15497 / L2-TR).